The primary structure comprises 498 residues: ATP synthase subunit beta, chloroplastic (498 aa).

Residue 172-179 (GGAGVGKT) coordinates ATP.

The protein belongs to the ATPase alpha/beta chains family. As to quaternary structure, F-type ATPases have 2 components, CF(1) - the catalytic core - and CF(0) - the membrane proton channel. CF(1) has five subunits: alpha(3), beta(3), gamma(1), delta(1), epsilon(1). CF(0) has four main subunits: a(1), b(1), b'(1) and c(9-12).

It localises to the plastid. The protein resides in the chloroplast thylakoid membrane. The enzyme catalyses ATP + H2O + 4 H(+)(in) = ADP + phosphate + 5 H(+)(out). Its function is as follows. Produces ATP from ADP in the presence of a proton gradient across the membrane. The catalytic sites are hosted primarily by the beta subunits. The polypeptide is ATP synthase subunit beta, chloroplastic (Carica papaya (Papaya)).